The primary structure comprises 426 residues: Histidine--tRNA ligase (426 aa).

Belongs to the class-II aminoacyl-tRNA synthetase family. In terms of assembly, homodimer.

It is found in the cytoplasm. It carries out the reaction tRNA(His) + L-histidine + ATP = L-histidyl-tRNA(His) + AMP + diphosphate + H(+). The protein is Histidine--tRNA ligase of Streptococcus pyogenes serotype M3 (strain ATCC BAA-595 / MGAS315).